The chain runs to 196 residues: dTTP/UTP pyrophosphatase (196 aa).

Asp76 (proton acceptor) is an active-site residue.

The protein belongs to the Maf family. YhdE subfamily. A divalent metal cation serves as cofactor.

The protein localises to the cytoplasm. It carries out the reaction dTTP + H2O = dTMP + diphosphate + H(+). It catalyses the reaction UTP + H2O = UMP + diphosphate + H(+). Functionally, nucleoside triphosphate pyrophosphatase that hydrolyzes dTTP and UTP. May have a dual role in cell division arrest and in preventing the incorporation of modified nucleotides into cellular nucleic acids. The polypeptide is dTTP/UTP pyrophosphatase (Chlorobium chlorochromatii (strain CaD3)).